Here is a 404-residue protein sequence, read N- to C-terminus: Probable tRNA sulfurtransferase (404 aa).

Positions 61-166 (EAISERLKDV…SGYSYIMCGE (106 aa)) constitute a THUMP domain. ATP contacts are provided by residues 184–185 (LL), 209–210 (HF), R266, G288, and Q297.

Belongs to the ThiI family.

The protein resides in the cytoplasm. The catalysed reaction is [ThiI sulfur-carrier protein]-S-sulfanyl-L-cysteine + a uridine in tRNA + 2 reduced [2Fe-2S]-[ferredoxin] + ATP + H(+) = [ThiI sulfur-carrier protein]-L-cysteine + a 4-thiouridine in tRNA + 2 oxidized [2Fe-2S]-[ferredoxin] + AMP + diphosphate. The enzyme catalyses [ThiS sulfur-carrier protein]-C-terminal Gly-Gly-AMP + S-sulfanyl-L-cysteinyl-[cysteine desulfurase] + AH2 = [ThiS sulfur-carrier protein]-C-terminal-Gly-aminoethanethioate + L-cysteinyl-[cysteine desulfurase] + A + AMP + 2 H(+). It participates in cofactor biosynthesis; thiamine diphosphate biosynthesis. Catalyzes the ATP-dependent transfer of a sulfur to tRNA to produce 4-thiouridine in position 8 of tRNAs, which functions as a near-UV photosensor. Also catalyzes the transfer of sulfur to the sulfur carrier protein ThiS, forming ThiS-thiocarboxylate. This is a step in the synthesis of thiazole, in the thiamine biosynthesis pathway. The sulfur is donated as persulfide by IscS. The chain is Probable tRNA sulfurtransferase from Bacillus cereus (strain G9842).